Reading from the N-terminus, the 134-residue chain is Small ribosomal subunit protein uS8c (134 aa).

Belongs to the universal ribosomal protein uS8 family. As to quaternary structure, part of the 30S ribosomal subunit.

It localises to the plastid. Its subcellular location is the chloroplast. Functionally, one of the primary rRNA binding proteins, it binds directly to 16S rRNA central domain where it helps coordinate assembly of the platform of the 30S subunit. This chain is Small ribosomal subunit protein uS8c (rps8), found in Coffea arabica (Arabian coffee).